A 175-amino-acid chain; its full sequence is Protein MAL2 (175 aa).

At 1 to 33 (MSAGGAVPPPPNPAVSFPAPRVTLPAGPDILRT) the chain is on the cytoplasmic side. The MARVEL domain maps to 30–174 (ILRTYSGAFV…SLGLALRRWR (145 aa)). Residues 34–54 (YSGAFVCLEIVLGGLVWILVA) form a helical membrane-spanning segment. Topologically, residues 55–65 (SSNVPLPLLQG) are lumenal. Residues 66 to 86 (WVMFVSVTAFFFSLLFLGLFL) form a helical membrane-spanning segment. At 87-101 (SGMVTQIDANWNFLD) the chain is on the cytoplasmic side. The chain crosses the membrane as a helical span at residues 102–122 (FVYHFIVFVFYFGAFLLEAAA). At 123–148 (TSLHDLQCNTTMTVKPLLNDNQYNIN) the chain is on the lumenal side. N131 carries an N-linked (GlcNAc...) asparagine glycan. A helical membrane pass occupies residues 149–169 (VAATVFAFMTTACYGCSLGLA). The Cytoplasmic segment spans residues 170 to 175 (LRRWRP).

It belongs to the MAL family. In terms of assembly, interacts with TPD52L2.

The protein resides in the cell membrane. It is found in the apical cell membrane. Functionally, member of the machinery of polarized transport. Required for the indirect transcytotic route at the step of the egress of the transcytosing cargo from perinuclear endosomes in order for it to travel to the apical surface via a raft-dependent pathway. The sequence is that of Protein MAL2 (Mal2) from Mus musculus (Mouse).